A 571-amino-acid polypeptide reads, in one-letter code: Proline--tRNA ligase (571 aa).

The protein belongs to the class-II aminoacyl-tRNA synthetase family. ProS type 1 subfamily. In terms of assembly, homodimer.

The protein resides in the cytoplasm. It catalyses the reaction tRNA(Pro) + L-proline + ATP = L-prolyl-tRNA(Pro) + AMP + diphosphate. Its function is as follows. Catalyzes the attachment of proline to tRNA(Pro) in a two-step reaction: proline is first activated by ATP to form Pro-AMP and then transferred to the acceptor end of tRNA(Pro). As ProRS can inadvertently accommodate and process non-cognate amino acids such as alanine and cysteine, to avoid such errors it has two additional distinct editing activities against alanine. One activity is designated as 'pretransfer' editing and involves the tRNA(Pro)-independent hydrolysis of activated Ala-AMP. The other activity is designated 'posttransfer' editing and involves deacylation of mischarged Ala-tRNA(Pro). The misacylated Cys-tRNA(Pro) is not edited by ProRS. The chain is Proline--tRNA ligase from Thermodesulfovibrio yellowstonii (strain ATCC 51303 / DSM 11347 / YP87).